The following is a 119-amino-acid chain: Holo-[acyl-carrier-protein] synthase (119 aa).

Mg(2+)-binding residues include Asp8 and Glu58.

It belongs to the P-Pant transferase superfamily. AcpS family. Mg(2+) serves as cofactor.

It is found in the cytoplasm. It catalyses the reaction apo-[ACP] + CoA = holo-[ACP] + adenosine 3',5'-bisphosphate + H(+). Its function is as follows. Transfers the 4'-phosphopantetheine moiety from coenzyme A to a Ser of acyl-carrier-protein. The protein is Holo-[acyl-carrier-protein] synthase of Streptococcus thermophilus (strain ATCC BAA-491 / LMD-9).